We begin with the raw amino-acid sequence, 483 residues long: Probable glycine dehydrogenase (decarboxylating) subunit 2 (483 aa).

The segment at 1-33 (MLIFEHSRKNRRNYSQAPATRPAKNNIPDHLKR) is disordered. Lys264 bears the N6-(pyridoxal phosphate)lysine mark.

The protein belongs to the GcvP family. C-terminal subunit subfamily. The glycine cleavage system is composed of four proteins: P, T, L and H. In this organism, the P 'protein' is a heterodimer of two subunits. The cofactor is pyridoxal 5'-phosphate.

It carries out the reaction N(6)-[(R)-lipoyl]-L-lysyl-[glycine-cleavage complex H protein] + glycine + H(+) = N(6)-[(R)-S(8)-aminomethyldihydrolipoyl]-L-lysyl-[glycine-cleavage complex H protein] + CO2. The glycine cleavage system catalyzes the degradation of glycine. The P protein binds the alpha-amino group of glycine through its pyridoxal phosphate cofactor; CO(2) is released and the remaining methylamine moiety is then transferred to the lipoamide cofactor of the H protein. This is Probable glycine dehydrogenase (decarboxylating) subunit 2 from Nitrosomonas europaea (strain ATCC 19718 / CIP 103999 / KCTC 2705 / NBRC 14298).